The following is a 341-amino-acid chain: MIEFRQVSKSFHKKKQTIDALKDVSFTVNRNDIFGVIGYSGAGKSTLVRLVNHLEAASNGQVIVDGHDITNYSDKMMRDIKKDIGMIFQHFNLLNSATVFKNVAMPLILSKKSKTEIKQRVTEMLEFVGLSDKKDQFPDELSGGQKQRVAIARALVTNPKILLCDEATSALDPATTASILTLLKNVNQTFGITIMMITHEMRVIKDICNRVAVMEKGQVVETGTVKEVFSHPKTTIAQNFVSTVIQTEPSPSLIRRLNDKQVGDFKDYKIFVEETQMTQPIINDLIQICGREVKILFSSMSEIQGNTVCYMWLRFNMDQQFDGTAINQYFKEKNIQFEEVH.

Positions 2-241 constitute an ABC transporter domain; it reads IEFRQVSKSF…PKTTIAQNFV (240 aa). 38-45 serves as a coordination point for ATP; it reads GYSGAGKS.

Belongs to the ABC transporter superfamily. Methionine importer (TC 3.A.1.24) family. As to quaternary structure, the complex is composed of two ATP-binding proteins (MetN), two transmembrane proteins (MetI) and a solute-binding protein (MetQ).

Its subcellular location is the cell membrane. It catalyses the reaction L-methionine(out) + ATP + H2O = L-methionine(in) + ADP + phosphate + H(+). The enzyme catalyses D-methionine(out) + ATP + H2O = D-methionine(in) + ADP + phosphate + H(+). Part of the ABC transporter complex MetNIQ involved in methionine import. Responsible for energy coupling to the transport system. The polypeptide is Methionine import ATP-binding protein MetN 1 (Staphylococcus aureus (strain MRSA252)).